Reading from the N-terminus, the 484-residue chain is tRNA sulfurtransferase (484 aa).

The region spanning 63-167 (REMIERLTCT…LDRLFVIHRQ (105 aa)) is the THUMP domain. Residues 185-186 (LM), Lys267, Gly289, and Gln298 contribute to the ATP site. Cys346 and Cys457 form a disulfide bridge. A Rhodanese domain is found at 405 to 483 (VLPGQIVIDI…GHTNVRVYRP (79 aa)). The Cysteine persulfide intermediate role is filled by Cys457.

The protein belongs to the ThiI family.

The protein localises to the cytoplasm. The catalysed reaction is [ThiI sulfur-carrier protein]-S-sulfanyl-L-cysteine + a uridine in tRNA + 2 reduced [2Fe-2S]-[ferredoxin] + ATP + H(+) = [ThiI sulfur-carrier protein]-L-cysteine + a 4-thiouridine in tRNA + 2 oxidized [2Fe-2S]-[ferredoxin] + AMP + diphosphate. The enzyme catalyses [ThiS sulfur-carrier protein]-C-terminal Gly-Gly-AMP + S-sulfanyl-L-cysteinyl-[cysteine desulfurase] + AH2 = [ThiS sulfur-carrier protein]-C-terminal-Gly-aminoethanethioate + L-cysteinyl-[cysteine desulfurase] + A + AMP + 2 H(+). Its pathway is cofactor biosynthesis; thiamine diphosphate biosynthesis. In terms of biological role, catalyzes the ATP-dependent transfer of a sulfur to tRNA to produce 4-thiouridine in position 8 of tRNAs, which functions as a near-UV photosensor. Also catalyzes the transfer of sulfur to the sulfur carrier protein ThiS, forming ThiS-thiocarboxylate. This is a step in the synthesis of thiazole, in the thiamine biosynthesis pathway. The sulfur is donated as persulfide by IscS. This Pseudomonas aeruginosa (strain LESB58) protein is tRNA sulfurtransferase.